The primary structure comprises 365 residues: 5-hydroxytryptamine receptor 1E (365 aa).

The Extracellular segment spans residues 1–22 (MNITNCTTDASMVVRPKTVTEK). N-linked (GlcNAc...) asparagine glycosylation is found at asparagine 2 and asparagine 5. The helical transmembrane segment at 23–47 (MLICMTLVIITTLTMLLNSAVIMAI) threads the bilayer. The Cytoplasmic segment spans residues 48–59 (CTTKKLHQPANY). Residues 60 to 82 (LICSLAVTDLLVAVLVMPLSIMY) form a helical membrane-spanning segment. Residues 83-96 (IVMDSWRLGYFICE) lie on the Extracellular side of the membrane. A disulfide bridge connects residues cysteine 95 and cysteine 173. A helical membrane pass occupies residues 97–118 (VWLSVDMTCCTCSILHLCVIAL). Aspartate 102 and threonine 107 together coordinate ergotamine. The short motif at 119–121 (DRY) is the DRY motif; important for ligand-induced conformation changes element. Residues 119–138 (DRYWAITNAIEYARKRTAKR) are Cytoplasmic-facing. The helical transmembrane segment at 139-160 (AGLMILTVWTISIFISMPPLFW) threads the bilayer. The Extracellular segment spans residues 161 to 179 (RSHRQLSPPPSQCTIQHDH). Residue isoleucine 175 coordinates ergotamine. A helical membrane pass occupies residues 180-202 (VIYTIYSTFGAFYIPLTLILILY). The Cytoplasmic segment spans residues 203–291 (YRIYHAAKSL…SSTRERKAAR (89 aa)). Residues 292–314 (ILGLILGAFILSWLPFFIKELIV) form a helical membrane-spanning segment. Over 315-324 (GLSIYTVSSE) the chain is Extracellular. Residues 325–347 (VGDFLTWLGYVNSLINPLLYTSF) form a helical membrane-spanning segment. The NPxxY motif; important for ligand-induced conformation changes and signaling motif lies at 340-344 (NPLLY). At 348 to 365 (NEDFKLAFKKLIRCREHT) the chain is on the cytoplasmic side.

Belongs to the G-protein coupled receptor 1 family. In terms of tissue distribution, detected in the brain with the greatest abundance in the hippocampus, followed by the olfactory bulb. Lower levels are detected in the cortex, thalamus, pons, hypothalamus, midbrain, striatum, and cerebellum.

It localises to the cell membrane. In terms of biological role, G-protein coupled receptor for 5-hydroxytryptamine (serotonin). Also functions as a receptor for various alkaloids and psychoactive substances. Ligand binding causes a conformation change that triggers signaling via guanine nucleotide-binding proteins (G proteins) and modulates the activity of down-stream effectors, such as adenylate cyclase. Signaling inhibits adenylate cyclase activity. This Cavia porcellus (Guinea pig) protein is 5-hydroxytryptamine receptor 1E (5HT1E).